The sequence spans 472 residues: Eukaryotic translation initiation factor 2 subunit 3 (472 aa).

At Ala2 the chain carries N-acetylalanine. Residue Ser16 is modified to Phosphoserine. The region spanning 39–248 (QATINIGTIG…IVKKIPVPPR (210 aa)) is the tr-type G domain. The segment at 48-55 (GHVAHGKS) is G1. Position 51–56 (51–56 (AHGKST)) interacts with GTP. The interval 76 to 80 (NITIK) is G2. The interval 134-137 (DCPG) is G3. Residues 190–193 (NKID) and 225–227 (SAQ) each bind GTP. A G4 region spans residues 190–193 (NKID). A G5 region spans residues 225–227 (SAQ). The interacts with CDC123 stretch occupies residues 457 to 469 (GQIRRGVTIKPTV).

The protein belongs to the TRAFAC class translation factor GTPase superfamily. Classic translation factor GTPase family. EIF2G subfamily. Eukaryotic translation initiation factor 2 eIF2 is a heterotrimeric complex composed of an alpha (EIF2S1), a beta (EIF2S2) and a gamma (EIF2S3) chain. eIF2 is member of the 43S pre-initiation complex (43S PIC). Interacts (via C-terminus) with CDC123; the interaction is direct.

The protein localises to the cytoplasm. The protein resides in the cytosol. The catalysed reaction is GTP + H2O = GDP + phosphate + H(+). Its function is as follows. Member of the eIF2 complex that functions in the early steps of protein synthesis by forming a ternary complex with GTP and initiator tRNA. This complex binds to a 40S ribosomal subunit, followed by mRNA binding to form the 43S pre-initiation complex (43S PIC). Junction of the 60S ribosomal subunit to form the 80S initiation complex is preceded by hydrolysis of the GTP bound to eIF2 and release of an eIF2-GDP binary complex. In order for eIF2 to recycle and catalyze another round of initiation, the GDP bound to eIF2 must exchange with GTP by way of a reaction catalyzed by eIF-2B. The protein is Eukaryotic translation initiation factor 2 subunit 3 (EIF2S3) of Bos taurus (Bovine).